The primary structure comprises 239 residues: Homeobox-leucine zipper protein HOX12 (239 aa).

The interval 25–65 (ATSGGEQKKARQRRRRKVKPEAAAALAGESGGDEQAKKRRL) is disordered. Residues 58 to 117 (EQAKKRRLSDEQARFLEMSFKKERKLETPRKVQLAAELGLDAKQVAVWFQNRRARHKSKL) constitute a DNA-binding region (homeobox). Residues 107-168 (QNRRARHKSK…KLAAVAAATT (62 aa)) are a coiled coil.

It belongs to the HD-ZIP homeobox family. Class I subfamily. As to expression, expressed in seedlings, roots, stems, leaf sheaths and panicles.

The protein localises to the nucleus. Its function is as follows. Probable transcription factor. The chain is Homeobox-leucine zipper protein HOX12 (HOX12) from Oryza sativa subsp. japonica (Rice).